We begin with the raw amino-acid sequence, 384 residues long: uncharacterized protein (384 aa).

Disordered regions lie at residues 133 to 257 and 297 to 368; these read RQNS…TNQD and ERTP…STAT. Low complexity predominate over residues 143-157; that stretch reads PSTSSEPEPQPSTSS. The segment covering 302–315 has biased composition (acidic residues); it reads DQTDITDDSADWSE. The span at 316–342 shows a compositional bias: basic and acidic residues; it reads GETRRPSHSEVGERRLSRENNSEDPNR. The span at 343-363 shows a compositional bias: basic residues; sequence SRSRSRSRERRRRRPRVRPGR.

This is an uncharacterized protein from Gallid herpesvirus 2 (strain Chicken/Md5/ATCC VR-987) (GaHV-2).